A 69-amino-acid chain; its full sequence is uncharacterized protein (69 aa).

A run of 2 helical transmembrane segments spans residues 7–29 and 44–66; these read LLSG…LGSI and ALQV…LGLL.

It is found in the cell membrane. This is an uncharacterized protein from Archaeoglobus fulgidus (strain ATCC 49558 / DSM 4304 / JCM 9628 / NBRC 100126 / VC-16).